A 535-amino-acid chain; its full sequence is MGFEDLLDKVGGFGPFQLRNLVLMALPRMLLPMHFLLPVFMAAVPAHHCALPGAPANLSHQDLWLEAHLPRETDGSFSSCLRFAYPQTVPNVTLGTEVSNSGEPEGEPLTVPCSQGWEYDRSEFSSTIATEWDLVCQQRGLNKITSTCFFIGVLVGAVVYGYLSDRFGRRRLLLVAYVSSLVLGLMSAASINYIMFVVTRTLTGSALAGFTIIVLPLELEWLDVEHRTVAGVISTVFWSGGVLLLALVGYLIRSWRWLLLAATLPCVPGIISIWWVPESARWLLTQGRVEEAKKYLLSCAKLNGRPVGEGSLSQEALNNVVTMERALQRPSYLDLFRTSQLRHISLCCMMVWFGVNFSYYGLTLDVSGLGLNVYQTQLLFGAVELPSKIMVYFLVRRLGRRLTEAGMLLGAALTFGTSLLVSLETKSWITALVVVGKAFSEAAFTTAYLFTSELYPTVLRQTGLGLTALMGRLGASLAPLAALLDGVWLLLPKVAYGGIALVAACTALLLPETKKAQLPETIQDVERKSTQEEDV.

A run of 12 helical transmembrane segments spans residues 21-41 (LVLM…PVFM), 144-164 (ITST…GYLS), 178-198 (VSSL…MFVV), 202-222 (LTGS…LEWL), 232-252 (VIST…GYLI), 257-277 (WLLL…WWVP), 344-364 (ISLC…GLTL), 375-395 (QTQL…YFLV), 402-422 (LTEA…LLVS), 429-449 (ITAL…TAYL), 464-484 (LGLT…AALL), and 489-509 (LLLP…TALL).

This sequence belongs to the major facilitator (TC 2.A.1) superfamily. Organic cation transporter (TC 2.A.1.19) family. In terms of tissue distribution, expressed in liver and kidney. Expressed at low levels in adipose tissue. Expressed in fetal liver. In kidney, expressed at the brush border of the proximal tubule S3 segment (S3) in the outer stripe and medullary rays. In kidney, expression is higher in female than male.

The protein localises to the basolateral cell membrane. It is found in the apical cell membrane. The protein resides in the cell membrane. It carries out the reaction orotate(out) + L-glutamate(in) = orotate(in) + L-glutamate(out). It catalyses the reaction 3',5'-cyclic GMP(in) = 3',5'-cyclic GMP(out). The catalysed reaction is GMP(in) = GMP(out). The enzyme catalyses 2'-deoxyguanosine(in) = 2'-deoxyguanosine(out). It carries out the reaction GDP(in) = GDP(out). It catalyses the reaction guanosine(in) = guanosine(out). The catalysed reaction is GTP(in) = GTP(out). The enzyme catalyses 3',5'-cyclic AMP(in) = 3',5'-cyclic AMP(out). It carries out the reaction creatinine(in) = creatinine(out). It catalyses the reaction prostaglandin E2(out) = prostaglandin E2(in). The catalysed reaction is 2-oxoglutarate(in) = 2-oxoglutarate(out). The enzyme catalyses glutarate(in) = glutarate(out). It carries out the reaction urate(out) = urate(in). It catalyses the reaction estrone 3-sulfate(out) = estrone 3-sulfate(in). Functionally, functions as a Na(+)-independent bidirectional multispecific transporter. Contributes to the renal and hepatic elimination of endogenous organic compounds from the systemic circulation into the urine and bile, respectively. Capable of transporting a wide range of purine and pyrimidine nucleobases, nucleosides, and nucleotides with cGMP, 2'deoxyguanosine and GMP being the preferred substrates. Functions as a pH- and chloride-independent cGMP bidirectional facilitative transporter that can regulate both intracellular and extracellular levels of cGMP and may be involved in cGMP signaling pathways. Mediates orotate/glutamate bidirectional exchange and most likely display a physiological role in hepatic release of glutamate into the blood. Involved in renal secretion and possible reabsorption of creatinine. Able to uptake prostaglandin E2 (PGE2) and may contribute to PGE2 renal excretion. Also transports alpha-ketoglutarate and urate. Apart from the orotate/glutamate exchange, the counterions for the uptake of other SLC22A7/OAT2 substrates remain to be identified. The sequence is that of Solute carrier family 22 member 7 from Rattus norvegicus (Rat).